A 201-amino-acid chain; its full sequence is Holliday junction branch migration complex subunit RuvA (201 aa).

The segment at 1-63 (MIASVRGEVL…EDSMTLYGFA (63 aa)) is domain I. The domain II stretch occupies residues 64–142 (DTEARDLFGL…LVPVQAGPPG (79 aa)). The tract at residues 143–153 (STPAVAATPVR) is flexible linker. A domain III region spans residues 153-201 (REQVVEALTGLGFPLKQAEQALDTVLAEQPAADTSTALRAALSLLGKNR).

The protein belongs to the RuvA family. As to quaternary structure, homotetramer. Forms an RuvA(8)-RuvB(12)-Holliday junction (HJ) complex. HJ DNA is sandwiched between 2 RuvA tetramers; dsDNA enters through RuvA and exits via RuvB. An RuvB hexamer assembles on each DNA strand where it exits the tetramer. Each RuvB hexamer is contacted by two RuvA subunits (via domain III) on 2 adjacent RuvB subunits; this complex drives branch migration. In the full resolvosome a probable DNA-RuvA(4)-RuvB(12)-RuvC(2) complex forms which resolves the HJ.

Its subcellular location is the cytoplasm. The RuvA-RuvB-RuvC complex processes Holliday junction (HJ) DNA during genetic recombination and DNA repair, while the RuvA-RuvB complex plays an important role in the rescue of blocked DNA replication forks via replication fork reversal (RFR). RuvA specifically binds to HJ cruciform DNA, conferring on it an open structure. The RuvB hexamer acts as an ATP-dependent pump, pulling dsDNA into and through the RuvAB complex. HJ branch migration allows RuvC to scan DNA until it finds its consensus sequence, where it cleaves and resolves the cruciform DNA. The chain is Holliday junction branch migration complex subunit RuvA from Nocardia farcinica (strain IFM 10152).